Here is a 719-residue protein sequence, read N- to C-terminus: B3 domain-containing protein Os03g0120900 (719 aa).

Positions 7–110 form a DNA-binding region, TF-B3; the sequence is HHHFIKVMVG…HFMVLPFGLN (104 aa). 2 disordered regions span residues 328–381 and 412–443; these read RGSF…RSEQ and EEPQHNQGENEGNLDQVNNKETDEEQIERNAV. A compositionally biased stretch (basic and acidic residues) spans 351 to 366; the sequence is DSAENTLKERSEERQP. Positions 416–430 are enriched in polar residues; sequence HNQGENEGNLDQVNN.

Its subcellular location is the nucleus. The sequence is that of B3 domain-containing protein Os03g0120900 from Oryza sativa subsp. japonica (Rice).